The following is a 382-amino-acid chain: Protein-arginine rhamnosyltransferase (382 aa).

DTDP-beta-L-rhamnose-binding positions include Asn17 to Asp20, Tyr187, Gln252, and Arg268 to Ser272. Asp20 (proton acceptor) is an active-site residue. Glu270 is an active-site residue.

This sequence belongs to the glycosyltransferase 104 family.

The enzyme catalyses dTDP-beta-L-rhamnose + L-arginyl-[protein] = N(omega)-(alpha-L-rhamnosyl)-L-arginyl-[protein] + dTDP + H(+). In terms of biological role, protein-arginine rhamnosyltransferase that catalyzes the transfer of a single rhamnose to elongation factor P (EF-P) on 'Lys-32', a modification required for EF-P-dependent rescue of polyproline stalled ribosomes. The chain is Protein-arginine rhamnosyltransferase from Neisseria meningitidis.